The sequence spans 98 residues: Cell division topological specificity factor (98 aa).

Belongs to the MinE family.

In terms of biological role, prevents the cell division inhibition by proteins MinC and MinD at internal division sites while permitting inhibition at polar sites. This ensures cell division at the proper site by restricting the formation of a division septum at the midpoint of the long axis of the cell. This chain is Cell division topological specificity factor, found in Methylorubrum populi (strain ATCC BAA-705 / NCIMB 13946 / BJ001) (Methylobacterium populi).